Consider the following 426-residue polypeptide: Histidine--tRNA ligase (426 aa).

It belongs to the class-II aminoacyl-tRNA synthetase family.

It is found in the cytoplasm. The catalysed reaction is tRNA(His) + L-histidine + ATP = L-histidyl-tRNA(His) + AMP + diphosphate + H(+). In Thermoplasma volcanium (strain ATCC 51530 / DSM 4299 / JCM 9571 / NBRC 15438 / GSS1), this protein is Histidine--tRNA ligase (hisS).